We begin with the raw amino-acid sequence, 120 residues long: Host cell factor C1 regulator 1 (120 aa).

Positions 1-30 (MILQQPLERGPPSRDPRATTGVTRGLNASL) are disordered. Polar residues predominate over residues 20–30 (TGVTRGLNASL). An interaction with HCFC1 region spans residues 58–61 (DHPY). The Nuclear export signal motif lies at 92–101 (IPEALRLLRL).

Interacts with HCFC1.

Its subcellular location is the cytoplasm. The protein resides in the nucleus. Functionally, regulates HCFC1 activity by modulating its subcellular localization. Overexpression of HCFC1R1 leads to accumulation of HCFC1 in the cytoplasm. HCFC1R1-mediated export may provide the pool of cytoplasmic HCFC1 required for import of virion-derived VP16 into the nucleus. This Mus musculus (Mouse) protein is Host cell factor C1 regulator 1 (Hcfc1r1).